We begin with the raw amino-acid sequence, 287 residues long: uncharacterized protein (287 aa).

Residues 1 to 23 form a disordered region; the sequence is MTVSDSPAQRQTPPQTPGGTAPR. Positions 7–23 are enriched in low complexity; it reads PAQRQTPPQTPGGTAPR. Mg(2+) contacts are provided by aspartate 31, aspartate 33, and aspartate 204.

This sequence belongs to the HAD-like hydrolase superfamily. SerB family.

This is an uncharacterized protein from Mycobacterium tuberculosis (strain CDC 1551 / Oshkosh).